A 512-amino-acid polypeptide reads, in one-letter code: Glutathione-binding protein GsiB (512 aa).

The first 26 residues, 1-26 (MARAVHRSGLVALGIATALMASCAFA), serve as a signal peptide directing secretion.

Belongs to the bacterial solute-binding protein 5 family. The complex is composed of two ATP-binding proteins (GsiA), two transmembrane proteins (GsiC and GsiD) and a solute-binding protein (GsiB).

The protein resides in the periplasm. Its function is as follows. Part of the ABC transporter complex GsiABCD involved in glutathione import. Binds glutathione. This Escherichia coli O1:K1 / APEC protein is Glutathione-binding protein GsiB.